Consider the following 975-residue polypeptide: Protein cramped (975 aa).

Disordered stretches follow at residues 1–37 (MEELCKQPPPPPPLPPPPSSPSVAIEDPLPNGKGGGA), 71–111 (QKMK…GSGK), 318–346 (AIFPSSLPSTATNNNNNNNETEPMQPSVA), 403–450 (PVAA…LMKM), and 809–844 (PIDRVDGTSSGGISSSGSKPDSSMGATAASQDQEPG). Pro residues predominate over residues 7 to 20 (QPPPPPPLPPPPSS). Residues 86–98 (SEREPNKKEEKAA) show a composition bias toward basic and acidic residues. A compositionally biased stretch (polar residues) spans 100–111 (KTPSQLKTGSGK). Positions 109-173 (SGKTTWTNVE…HYYQTYHKIC (65 aa)) constitute an SANT domain. A compositionally biased stretch (basic and acidic residues) spans 410–425 (LRTESGSEKRSPETKK). Residues 815-833 (GTSSGGISSSGSKPDSSMG) show a composition bias toward low complexity.

This sequence belongs to the cramped family.

It is found in the nucleus. Polycomb group (Pc-G) genes are needed to maintain expression patterns of the homeotic selector genes of the Antennapedia (Antp-C) and Bithorax (Bx-C) complexes, and hence for the maintenance of segmental determination. Can act as a modifier of position effect variegation (PEV). The chain is Protein cramped (crm) from Drosophila sechellia (Fruit fly).